A 1009-amino-acid polypeptide reads, in one-letter code: Translation initiation factor IF-2 (1009 aa).

The tract at residues 1–415 (MSDENENGRP…EREKEKRRGG (415 aa)) is disordered. Residues 94–110 (EELRARQRVVDAAREAQ) are compositionally biased toward basic and acidic residues. Residues 111–121 (ARQVAEQAAAE) are compositionally biased toward low complexity. Residues 122 to 136 (ARARAAQEAAQREAA) are compositionally biased toward basic and acidic residues. The span at 137-146 (AKAAAERAAA) shows a compositional bias: low complexity. Over residues 147–174 (APPPVAQAPAAPAPAAPVTPPPAAPQAP) the composition is skewed to pro residues. Low complexity predominate over residues 175-189 (RPVAQAPVAPSAPRQ). Basic and acidic residues-rich tracts occupy residues 208–218 (EPSRDRRDDRP) and 251–287 (PRPE…RPQG). The span at 311–320 (GGPPRGPRPG) shows a compositional bias: pro residues. Basic and acidic residues-rich tracts occupy residues 346–358 (MDRR…DRRK) and 403–415 (RARE…RRGG). A tr-type G domain is found at 505–675 (LRPPVVTIMG…LLQAEVLDLK (171 aa)). Residues 514 to 521 (GHVDHGKT) are G1. 514–521 (GHVDHGKT) lines the GTP pocket. Residues 539 to 543 (GITQH) form a G2 region. The interval 561-564 (DTPG) is G3. GTP contacts are provided by residues 561–565 (DTPGH) and 615–618 (NKMD). The interval 615-618 (NKMD) is G4. Residues 651 to 653 (SAK) form a G5 region.

This sequence belongs to the TRAFAC class translation factor GTPase superfamily. Classic translation factor GTPase family. IF-2 subfamily.

The protein resides in the cytoplasm. One of the essential components for the initiation of protein synthesis. Protects formylmethionyl-tRNA from spontaneous hydrolysis and promotes its binding to the 30S ribosomal subunits. Also involved in the hydrolysis of GTP during the formation of the 70S ribosomal complex. This chain is Translation initiation factor IF-2, found in Caulobacter vibrioides (strain ATCC 19089 / CIP 103742 / CB 15) (Caulobacter crescentus).